Here is a 460-residue protein sequence, read N- to C-terminus: Putative glycoside/cation symporter YagG (460 aa).

At 1 to 9 the chain is on the cytoplasmic side; sequence MTQLTMKDK. 2 consecutive transmembrane segments (helical) span residues 10–30 and 31–51; these read IGYG…MFLL and AYFY…LFLV. The Cytoplasmic portion of the chain corresponds to 52-78; that stretch reads SRVLDAVTDPLMGLLVDRTRTRHGQFR. Residues 79-99 form a helical membrane-spanning segment; that stretch reads PFLLWGAIPFGIVCVLTFYTP. Residues 100-106 are Periplasmic-facing; it reads DFSAQGK. Residues 107 to 127 form a helical membrane-spanning segment; that stretch reads IIYACVTYILLTLVYTFVNVP. Topologically, residues 128-150 are cytoplasmic; that stretch reads YCAMPGVITADPKERHALQSWRF. Residues 151 to 171 form a helical membrane-spanning segment; the sequence is FLAAAGSLAISGIALPLVSII. The Periplasmic segment spans residues 172 to 179; the sequence is GKGDEQVG. The helical transmembrane segment at 180–200 threads the bilayer; sequence YFGAMCVLGLSGVVLLYVCFF. At 201–262 the chain is on the cytoplasmic side; it reads TTKERYTFEV…FVKYVMDHPE (62 aa). The helical transmembrane segment at 263–283 threads the bilayer; sequence LATQFLLYGSLATMFGSLCSS. Residues 284-308 lie on the Periplasmic side of the membrane; it reads RLLGRFDRVTAFKWIIVAYSLISLL. A helical transmembrane segment spans residues 309–329; it reads IFVTPAEHIALIFALNILFLF. Residues 330 to 366 are Cytoplasmic-facing; that stretch reads VFNTTTPLQWLMASDVVDYEESRSGRRLDGLVFSTYL. A helical membrane pass occupies residues 367–387; that stretch reads FSLKIGLAIGGAVVGWILAYV. The Periplasmic segment spans residues 388 to 405; it reads NYSASSSVQPVEVLTTIK. The helical transmembrane segment at 406–426 threads the bilayer; that stretch reads ILFCVVPVVLYAGMFIMLSLY. Topologically, residues 427-460 are cytoplasmic; it reads KLTDARVEAISRQLIKHRAAQGEAVPDAATAASH.

Belongs to the sodium:galactoside symporter (TC 2.A.2) family.

Its subcellular location is the cell inner membrane. The sequence is that of Putative glycoside/cation symporter YagG (yagG) from Escherichia coli (strain K12).